We begin with the raw amino-acid sequence, 257 residues long: RNA polymerase sigma-G factor (257 aa).

Positions 66–79 (DLFQVGCIGLIKSI) match the Polymerase core binding motif. Positions 228-247 (QMEVADEIGISQAQVSRLEK) form a DNA-binding region, H-T-H motif.

It belongs to the sigma-70 factor family.

In terms of biological role, sigma factors are initiation factors that promote the attachment of RNA polymerase to specific initiation sites and are then released. This sigma factor is responsible for the expression of sporulation specific genes. The chain is RNA polymerase sigma-G factor (sigG) from Clostridium acetobutylicum (strain ATCC 824 / DSM 792 / JCM 1419 / IAM 19013 / LMG 5710 / NBRC 13948 / NRRL B-527 / VKM B-1787 / 2291 / W).